Here is a 145-residue protein sequence, read N- to C-terminus: Large ribosomal subunit protein uL15 (145 aa).

The disordered stretch occupies residues 1–42; that stretch reads MELHTLKATPGSRKAKHRVGRGHAAGKGKQAGRGQSGQTKRS. The span at 13–26 shows a compositional bias: basic residues; sequence RKAKHRVGRGHAAG.

This sequence belongs to the universal ribosomal protein uL15 family. In terms of assembly, part of the 50S ribosomal subunit.

Its function is as follows. Binds to the 23S rRNA. This chain is Large ribosomal subunit protein uL15, found in Metamycoplasma arthritidis (strain 158L3-1) (Mycoplasma arthritidis).